The sequence spans 482 residues: Isoxanthopterin deaminase (482 aa).

Positions 74 and 76 each coordinate Zn(2+). Residue Q79 coordinates substrate. H246 is a Zn(2+) binding site. Substrate is bound by residues E249 and H283. Zn(2+) is bound by residues H283 and D334.

This sequence belongs to the metallo-dependent hydrolases superfamily. ATZ/TRZ family. Zn(2+) is required as a cofactor.

The enzyme catalyses a 2-amino-4-hydroxypteridine + H2O + H(+) = a 2,4-dihydroxypteridine + NH4(+). The polypeptide is Isoxanthopterin deaminase (Unknown prokaryotic organism).